We begin with the raw amino-acid sequence, 191 residues long: Xanthine phosphoribosyltransferase (191 aa).

Residues Leu20 and Asn27 each contribute to the xanthine site. 128-132 lines the 5-phospho-alpha-D-ribose 1-diphosphate pocket; it reads ANGQA. Lys156 contributes to the xanthine binding site.

The protein belongs to the purine/pyrimidine phosphoribosyltransferase family. Xpt subfamily. As to quaternary structure, homodimer.

It localises to the cytoplasm. It catalyses the reaction XMP + diphosphate = xanthine + 5-phospho-alpha-D-ribose 1-diphosphate. The protein operates within purine metabolism; XMP biosynthesis via salvage pathway; XMP from xanthine: step 1/1. Its function is as follows. Converts the preformed base xanthine, a product of nucleic acid breakdown, to xanthosine 5'-monophosphate (XMP), so it can be reused for RNA or DNA synthesis. The polypeptide is Xanthine phosphoribosyltransferase (Acinetobacter baumannii (strain AB307-0294)).